Here is a 102-residue protein sequence, read N- to C-terminus: Small ribosomal subunit protein uS10 (102 aa).

Belongs to the universal ribosomal protein uS10 family. In terms of assembly, part of the 30S ribosomal subunit.

Functionally, involved in the binding of tRNA to the ribosomes. This is Small ribosomal subunit protein uS10 (rpsJ) from Bacillus subtilis (strain 168).